The following is a 795-amino-acid chain: Lon protease (795 aa).

The Lon N-terminal domain occupies 7–213; sequence PQILVVRNQV…KIIGSGIEDL (207 aa). 379–386 contacts ATP; the sequence is GPPGVGKS. The Lon proteolytic domain occupies 615–795; the sequence is DALPGIVNGM…YKDIYNKIFN (181 aa). Catalysis depends on residues serine 702 and lysine 745.

It belongs to the peptidase S16 family. As to quaternary structure, homohexamer. Organized in a ring with a central cavity.

It localises to the cytoplasm. It carries out the reaction Hydrolysis of proteins in presence of ATP.. In terms of biological role, ATP-dependent serine protease that mediates the selective degradation of mutant and abnormal proteins as well as certain short-lived regulatory proteins. Required for cellular homeostasis and for survival from DNA damage and developmental changes induced by stress. Degrades polypeptides processively to yield small peptide fragments that are 5 to 10 amino acids long. Binds to DNA in a double-stranded, site-specific manner. The chain is Lon protease from Mycoplasma pneumoniae (strain ATCC 29342 / M129 / Subtype 1) (Mycoplasmoides pneumoniae).